The primary structure comprises 184 residues: GMP synthase [glutamine-hydrolyzing] subunit A (184 aa).

A Glutamine amidotransferase type-1 domain is found at 3 to 184 (PICVVNNYGQ…YENFDAICTE (182 aa)). Cys-75 serves as the catalytic Nucleophile. Residues His-162 and Glu-164 contribute to the active site.

As to quaternary structure, heterodimer composed of a glutamine amidotransferase subunit (A) and a GMP-binding subunit (B).

The enzyme catalyses XMP + L-glutamine + ATP + H2O = GMP + L-glutamate + AMP + diphosphate + 2 H(+). The protein operates within purine metabolism; GMP biosynthesis; GMP from XMP (L-Gln route): step 1/1. Catalyzes the synthesis of GMP from XMP. The protein is GMP synthase [glutamine-hydrolyzing] subunit A of Methanoregula boonei (strain DSM 21154 / JCM 14090 / 6A8).